The chain runs to 132 residues: ATP synthase epsilon chain 1 (132 aa).

It belongs to the ATPase epsilon chain family. As to quaternary structure, F-type ATPases have 2 components, CF(1) - the catalytic core - and CF(0) - the membrane proton channel. CF(1) has five subunits: alpha(3), beta(3), gamma(1), delta(1), epsilon(1). CF(0) has three main subunits: a, b and c.

The protein resides in the cell inner membrane. Functionally, produces ATP from ADP in the presence of a proton gradient across the membrane. The polypeptide is ATP synthase epsilon chain 1 (Cereibacter sphaeroides (strain ATCC 17023 / DSM 158 / JCM 6121 / CCUG 31486 / LMG 2827 / NBRC 12203 / NCIMB 8253 / ATH 2.4.1.) (Rhodobacter sphaeroides)).